We begin with the raw amino-acid sequence, 329 residues long: Secretory carrier-associated membrane protein 2 (329 aa).

2 disordered regions span residues 1-21 (MSAFDTNPFADPVDVNPFQDP) and 51-72 (VTQLPGSSQPAVLQPSVEPTQP). Over 1–153 (MSAFDTNPFA…DYQRICKMLY (153 aa)) the chain is Cytoplasmic. The helical transmembrane segment at 154–174 (YLWMLHSVTLFLNLLACLAWF) threads the bilayer. Topologically, residues 175 to 181 (SGNSSKG) are lumenal. The helical transmembrane segment at 182–202 (VDFGLSILWFLIFTPCAFLCW) threads the bilayer. Over 203 to 218 (YRPIYKAFRSDNSFSF) the chain is Cytoplasmic. Residues 203–218 (YRPIYKAFRSDNSFSF) are interaction with SLC9A7. The helical transmembrane segment at 219–239 (FVFFFVFFCQIGIYIIQLVGI) threads the bilayer. At 240–262 (PGLGDSGWIAALSTLDNHSLAIS) the chain is on the lumenal side. The chain crosses the membrane as a helical span at residues 263–283 (VIMMVVAGFFTLCAVLSVFLL). Over 284-329 (QRVHSLYRRTGASFQQAQEEFSQGIFSSRTFHRAASSAAQGAFQGN) the chain is Cytoplasmic. A phosphoserine mark is found at serine 319 and serine 320.

This sequence belongs to the SCAMP family. In terms of assembly, interacts with SLC6A4 and SLC9A7. Interacts with SLC9A5; this interaction regulates SLC9A5 cell-surface targeting and SLC9A5 activity. Widely expressed.

The protein localises to the golgi apparatus. It localises to the trans-Golgi network membrane. It is found in the recycling endosome membrane. In terms of biological role, functions in post-Golgi recycling pathways. Acts as a recycling carrier to the cell surface. This is Secretory carrier-associated membrane protein 2 (SCAMP2) from Homo sapiens (Human).